The primary structure comprises 271 residues: MFSIQQPLLVFSDLDGTLLDSHSYDWQPAAPWLSRLREANVPVILCSSKTSAEMLYLQKTLGLQGLPLIAENGAVIQLAEQWQDIDGFPRIISGISHGEISQVLNTLREKEHFKFTTFDDVDDATIAEWTGLSRSQAALTQLHEASVTLIWRDSDERMAQFTARLNELGLQFMQGARFWHVLDASAGKDQAANWIIATYQQLSGKRPTTLGLGDGPNDAPLLEVMDYAVIVKGLNREGGHLHDEDPAHVWRTQREGPEGWREGLDHFFSAR.

Aspartate 13 serves as the catalytic Nucleophile. Residues aspartate 13, aspartate 15, and aspartate 214 each contribute to the Mg(2+) site.

This sequence belongs to the HAD-like hydrolase superfamily. MPGP family. It depends on Mg(2+) as a cofactor.

The protein resides in the cytoplasm. The enzyme catalyses 2-O-(alpha-D-mannosyl)-3-phosphoglycerate + H2O = (2R)-2-O-(alpha-D-mannosyl)-glycerate + phosphate. The sequence is that of Mannosyl-3-phosphoglycerate phosphatase from Escherichia coli O81 (strain ED1a).